Reading from the N-terminus, the 353-residue chain is Protein MGF 360-11L (353 aa).

This sequence belongs to the asfivirus MGF 360 family. In terms of assembly, interacts with host TBK1 ad IRF7.

In terms of biological role, plays a role in virus cell tropism, and may be required for efficient virus replication in macrophages. In addition, inhibits the phosphorylation of host TBK1 and IRF7 and thereby negatively regulates the host cGAS signaling pathway and antagonizes IFN-mediated antiviral activity. This chain is Protein MGF 360-11L, found in Ornithodoros (relapsing fever ticks).